Consider the following 130-residue polypeptide: Small ribosomal subunit protein uS9 (130 aa).

Residues 109-130 are disordered; the sequence is RMKERKKYGLKGARRAPQFSKR. Residues 111-130 show a composition bias toward basic residues; the sequence is KERKKYGLKGARRAPQFSKR.

Belongs to the universal ribosomal protein uS9 family.

The chain is Small ribosomal subunit protein uS9 from Listeria innocua serovar 6a (strain ATCC BAA-680 / CLIP 11262).